The chain runs to 234 residues: Transcriptional regulatory protein CseB (234 aa).

Residues H6–L119 form the Response regulatory domain. D55 bears the 4-aspartylphosphate mark. Residues G140–A234 constitute a DNA-binding region (ompR/PhoB-type).

Post-translationally, phosphorylated by CseC.

It is found in the cytoplasm. Its function is as follows. Member of the two-component regulatory system CseB/CseC involved in the stability of the cell envelope. CseB activates transcription of RNA polymerase sigma-E factor, in response to changes in the cell envelope. This is Transcriptional regulatory protein CseB (cseB) from Streptomyces coelicolor (strain ATCC BAA-471 / A3(2) / M145).